The sequence spans 453 residues: Ribosome biogenesis protein YTM1 (453 aa).

The segment at 19-102 is ubiquitin-like (UBL) domain; that stretch reads VKVRFFTNEE…ETVIDLQYTR (84 aa). A sufficient for interaction with ERB1 and association with 66S pre-ribosomes region spans residues 112–453; sequence SFTNEDWISS…KKIDIYREAN (342 aa). WD repeat units lie at residues 128 to 166, 168 to 206, 218 to 257, 292 to 332, 334 to 373, 380 to 420, and 422 to 453; these read GHGA…ESQY, GHSG…VEEG, GHKG…MSAV, GHGQ…CVDT, STGF…STEQ, GHTN…AMYT, and GKGG…REAN.

Belongs to the WD repeat WDR12/YTM1 family. In terms of assembly, component of the NOP7 complex, composed of ERB1, NOP7 and YTM1. The complex is held together by ERB1, which interacts with NOP7 via its N-terminal domain and with YTM1 via a high-affinity interaction between the seven-bladed beta-propeller domains of the 2 proteins. The NOP7 complex associates with the 66S pre-ribosome. Interacts (via UBL domain) with MDN1 (via VWFA/MIDAS domain).

The protein localises to the nucleus. Its subcellular location is the nucleolus. It is found in the nucleoplasm. Its function is as follows. Component of the NOP7 complex, which is required for maturation of the 25S and 5.8S ribosomal RNAs and formation of the 60S ribosome. The chain is Ribosome biogenesis protein YTM1 from Meyerozyma guilliermondii (strain ATCC 6260 / CBS 566 / DSM 6381 / JCM 1539 / NBRC 10279 / NRRL Y-324) (Yeast).